The chain runs to 399 residues: Acetylornithine aminotransferase (399 aa).

Pyridoxal 5'-phosphate-binding positions include 102–103 and phenylalanine 138; that span reads GA. Arginine 141 serves as a coordination point for N(2)-acetyl-L-ornithine. 223-226 is a pyridoxal 5'-phosphate binding site; that stretch reads DEVQ. The residue at position 252 (lysine 252) is an N6-(pyridoxal phosphate)lysine. Residue threonine 280 coordinates pyridoxal 5'-phosphate.

This sequence belongs to the class-III pyridoxal-phosphate-dependent aminotransferase family. ArgD subfamily. In terms of assembly, homodimer. It depends on pyridoxal 5'-phosphate as a cofactor.

The protein resides in the cytoplasm. The catalysed reaction is N(2)-acetyl-L-ornithine + 2-oxoglutarate = N-acetyl-L-glutamate 5-semialdehyde + L-glutamate. It participates in amino-acid biosynthesis; L-arginine biosynthesis; N(2)-acetyl-L-ornithine from L-glutamate: step 4/4. In Ralstonia nicotianae (strain ATCC BAA-1114 / GMI1000) (Ralstonia solanacearum), this protein is Acetylornithine aminotransferase.